The chain runs to 348 residues: Casein kinase II subunit alpha (348 aa).

The 286-residue stretch at 55–340 (YEIVRKIGRG…PLEAMEHPFF (286 aa)) folds into the Protein kinase domain. Residues 61 to 69 (IGRGKFSEV) and lysine 84 contribute to the ATP site. Catalysis depends on aspartate 172, which acts as the Proton acceptor.

This sequence belongs to the protein kinase superfamily. Ser/Thr protein kinase family. CK2 subfamily. Tetramer of two alpha and two beta chains.

It is found in the cytoplasm. The enzyme catalyses L-seryl-[protein] + ATP = O-phospho-L-seryl-[protein] + ADP + H(+). It carries out the reaction L-threonyl-[protein] + ATP = O-phospho-L-threonyl-[protein] + ADP + H(+). Casein kinases are operationally defined by their preferential utilization of acidic proteins such as caseins as substrates. The alpha chain contains the catalytic site. This is Casein kinase II subunit alpha from Theileria annulata.